A 447-amino-acid chain; its full sequence is Phosphoglucosamine mutase (447 aa).

Ser-88 (phosphoserine intermediate) is an active-site residue. Residues Ser-88, Asp-231, Asp-233, and Asp-235 each coordinate Mg(2+). Phosphoserine is present on Ser-88.

This sequence belongs to the phosphohexose mutase family. Mg(2+) is required as a cofactor. Activated by phosphorylation.

It catalyses the reaction alpha-D-glucosamine 1-phosphate = D-glucosamine 6-phosphate. Catalyzes the conversion of glucosamine-6-phosphate to glucosamine-1-phosphate. The polypeptide is Phosphoglucosamine mutase (Methanococcus maripaludis (strain C5 / ATCC BAA-1333)).